Here is a 104-residue protein sequence, read N- to C-terminus: uncharacterized protein (104 aa).

This is an uncharacterized protein from Orgyia pseudotsugata (Douglas-fir tussock moth).